A 354-amino-acid chain; its full sequence is UPF0283 protein YcjF (354 aa).

3 helical membrane passes run M71–V91, I101–V121, and E214–W234.

This sequence belongs to the UPF0283 family.

It localises to the cell inner membrane. The sequence is that of UPF0283 protein YcjF (ycjF) from Yersinia enterocolitica.